The primary structure comprises 415 residues: Meiotic driver wtf36 (415 aa).

Disordered stretches follow at residues 1 to 49 and 67 to 99; these read MKNK…DLNN and TTPP…SGTA. Over residues 11–29 the composition is skewed to basic and acidic residues; it reads SMDEMSAKNDNEIDLEKGP. 7 helical membrane-spanning segments follow: residues 105–125, 142–162, 169–189, 205–225, 240–260, 274–294, and 298–318; these read FLIK…PAVC, WTLF…LTYF, AVKV…IFLA, VTAI…AQCV, VVII…RSKF, CSIS…FWTL, and FSGL…TKGL.

This sequence belongs to the WTF family. Homomer. Forms protein aggregates. The two isoforms can interact with each other and with themselves. High sequence similarity is required for their interaction.

It is found in the spore membrane. It localises to the vacuole membrane. The protein resides in the ascus epiplasm. The protein localises to the cytoplasm. Its subcellular location is the endoplasmic reticulum membrane. Its function is as follows. Promotes unequal transmission of alleles from the parental zygote to progeny spores by acting as poison/antidote system where the poison and antidote proteins are produced from the same locus; the poison component is trans-acting and targets all spores within an ascus whereas the antidote component is spore-specific, leading to poisoning of all progeny that do not inherit the allele. In terms of biological role, localizes isoform 2 to the vacuole thereby facilitating its degradation. Forms toxic aggregates that disrupt spore maturation. This chain is Meiotic driver wtf36, found in Schizosaccharomyces pombe (Fission yeast).